We begin with the raw amino-acid sequence, 414 residues long: Ciliary microtubule-associated protein 2 (414 aa).

This Mus musculus (Mouse) protein is Ciliary microtubule-associated protein 2 (Cimap2).